A 160-amino-acid polypeptide reads, in one-letter code: 2-C-methyl-D-erythritol 2,4-cyclodiphosphate synthase (160 aa).

A divalent metal cation is bound by residues Asp10 and His12. Residues 10-12 and 36-37 each bind 4-CDP-2-C-methyl-D-erythritol 2-phosphate; these read DVH and HS. Residue His44 coordinates a divalent metal cation. Residues 58-60, 63-67, 102-108, 134-137, Phe141, and Arg144 each bind 4-CDP-2-C-methyl-D-erythritol 2-phosphate; these read DIG, FPDTD, AQAPKML, and TTTE.

Belongs to the IspF family. In terms of assembly, homotrimer. A divalent metal cation serves as cofactor.

The enzyme catalyses 4-CDP-2-C-methyl-D-erythritol 2-phosphate = 2-C-methyl-D-erythritol 2,4-cyclic diphosphate + CMP. Its pathway is isoprenoid biosynthesis; isopentenyl diphosphate biosynthesis via DXP pathway; isopentenyl diphosphate from 1-deoxy-D-xylulose 5-phosphate: step 4/6. Its function is as follows. Involved in the biosynthesis of isopentenyl diphosphate (IPP) and dimethylallyl diphosphate (DMAPP), two major building blocks of isoprenoid compounds. Catalyzes the conversion of 4-diphosphocytidyl-2-C-methyl-D-erythritol 2-phosphate (CDP-ME2P) to 2-C-methyl-D-erythritol 2,4-cyclodiphosphate (ME-CPP) with a corresponding release of cytidine 5-monophosphate (CMP). This Shewanella amazonensis (strain ATCC BAA-1098 / SB2B) protein is 2-C-methyl-D-erythritol 2,4-cyclodiphosphate synthase.